The primary structure comprises 489 residues: UDP-N-acetylmuramoylalanine--D-glutamate ligase (489 aa).

126–132 provides a ligand contact to ATP; that stretch reads GTNGKTT.

This sequence belongs to the MurCDEF family.

It localises to the cytoplasm. The enzyme catalyses UDP-N-acetyl-alpha-D-muramoyl-L-alanine + D-glutamate + ATP = UDP-N-acetyl-alpha-D-muramoyl-L-alanyl-D-glutamate + ADP + phosphate + H(+). It participates in cell wall biogenesis; peptidoglycan biosynthesis. Cell wall formation. Catalyzes the addition of glutamate to the nucleotide precursor UDP-N-acetylmuramoyl-L-alanine (UMA). The polypeptide is UDP-N-acetylmuramoylalanine--D-glutamate ligase (Mycolicibacterium paratuberculosis (strain ATCC BAA-968 / K-10) (Mycobacterium paratuberculosis)).